The following is a 73-amino-acid chain: Large ribosomal subunit protein bL31 (73 aa).

4 residues coordinate Zn(2+): Cys-16, Cys-18, Cys-37, and Cys-40.

This sequence belongs to the bacterial ribosomal protein bL31 family. Type A subfamily. Part of the 50S ribosomal subunit. The cofactor is Zn(2+).

Functionally, binds the 23S rRNA. The protein is Large ribosomal subunit protein bL31 of Pseudomonas savastanoi pv. phaseolicola (strain 1448A / Race 6) (Pseudomonas syringae pv. phaseolicola (strain 1448A / Race 6)).